The chain runs to 347 residues: NADH-quinone oxidoreductase subunit H (347 aa).

The next 8 membrane-spanning stretches (helical) occupy residues leucine 13 to isoleucine 33, alanine 82 to valine 102, valine 115 to glycine 135, isoleucine 161 to valine 181, phenylalanine 198 to leucine 218, alanine 258 to valine 278, valine 286 to valine 306, and leucine 321 to leucine 341.

It belongs to the complex I subunit 1 family. In terms of assembly, NDH-1 is composed of 14 different subunits. Subunits NuoA, H, J, K, L, M, N constitute the membrane sector of the complex.

The protein localises to the cell inner membrane. It carries out the reaction a quinone + NADH + 5 H(+)(in) = a quinol + NAD(+) + 4 H(+)(out). NDH-1 shuttles electrons from NADH, via FMN and iron-sulfur (Fe-S) centers, to quinones in the respiratory chain. The immediate electron acceptor for the enzyme in this species is believed to be ubiquinone. Couples the redox reaction to proton translocation (for every two electrons transferred, four hydrogen ions are translocated across the cytoplasmic membrane), and thus conserves the redox energy in a proton gradient. This subunit may bind ubiquinone. This is NADH-quinone oxidoreductase subunit H from Rhizobium rhizogenes (strain K84 / ATCC BAA-868) (Agrobacterium radiobacter).